The following is a 119-amino-acid chain: Large ribosomal subunit protein bL20 (119 aa).

The protein belongs to the bacterial ribosomal protein bL20 family.

Functionally, binds directly to 23S ribosomal RNA and is necessary for the in vitro assembly process of the 50S ribosomal subunit. It is not involved in the protein synthesizing functions of that subunit. The polypeptide is Large ribosomal subunit protein bL20 (Clostridium novyi (strain NT)).